We begin with the raw amino-acid sequence, 290 residues long: Ribosomal RNA small subunit methyltransferase A (290 aa).

6 residues coordinate S-adenosyl-L-methionine: asparagine 27, leucine 29, glycine 54, glutamate 75, aspartate 100, and asparagine 125.

Belongs to the class I-like SAM-binding methyltransferase superfamily. rRNA adenine N(6)-methyltransferase family. RsmA subfamily.

It is found in the cytoplasm. It carries out the reaction adenosine(1518)/adenosine(1519) in 16S rRNA + 4 S-adenosyl-L-methionine = N(6)-dimethyladenosine(1518)/N(6)-dimethyladenosine(1519) in 16S rRNA + 4 S-adenosyl-L-homocysteine + 4 H(+). In terms of biological role, specifically dimethylates two adjacent adenosines (A1518 and A1519) in the loop of a conserved hairpin near the 3'-end of 16S rRNA in the 30S particle. May play a critical role in biogenesis of 30S subunits. This is Ribosomal RNA small subunit methyltransferase A from Streptococcus pyogenes serotype M18 (strain MGAS8232).